The following is a 334-amino-acid chain: ADP-L-glycero-D-manno-heptose-6-epimerase (334 aa).

NADP(+) is bound by residues 11–12 (FI), 32–33 (DN), Lys39, Lys54, 77–81 (QGACS), and Asn94. Tyr141 (proton acceptor) is an active-site residue. Residue Lys145 participates in NADP(+) binding. Asn171 serves as a coordination point for substrate. NADP(+) is bound by residues Val172 and Lys180. Lys180 functions as the Proton acceptor in the catalytic mechanism. Substrate is bound by residues Arg182, His189, 203–206 (FGSN), Arg216, and Tyr295.

It belongs to the NAD(P)-dependent epimerase/dehydratase family. HldD subfamily. In terms of assembly, homopentamer. NADP(+) is required as a cofactor.

It carries out the reaction ADP-D-glycero-beta-D-manno-heptose = ADP-L-glycero-beta-D-manno-heptose. The protein operates within nucleotide-sugar biosynthesis; ADP-L-glycero-beta-D-manno-heptose biosynthesis; ADP-L-glycero-beta-D-manno-heptose from D-glycero-beta-D-manno-heptose 7-phosphate: step 4/4. Catalyzes the interconversion between ADP-D-glycero-beta-D-manno-heptose and ADP-L-glycero-beta-D-manno-heptose via an epimerization at carbon 6 of the heptose. The polypeptide is ADP-L-glycero-D-manno-heptose-6-epimerase (Neisseria meningitidis serogroup C (strain 053442)).